We begin with the raw amino-acid sequence, 216 residues long: Adenylate kinase (216 aa).

10 to 15 serves as a coordination point for ATP; it reads GAGKGT. The tract at residues 30-59 is NMP; sequence STGDIFRANIKEKTPLGIEAKRYIDNGQLV. AMP contacts are provided by residues Thr-31, Arg-36, 57 to 59, 85 to 88, and Gln-92; these read QLV and GFPR. Residues 126–163 are LID; the sequence is GRRVCTSCGASYHIRFNPPKIEGKCDICDNELIQRKDD. Arg-127 is an ATP binding site. Residues Cys-130 and Cys-133 each coordinate Zn(2+). Residue 136–137 coordinates ATP; it reads SY. The Zn(2+) site is built by Cys-150 and Cys-153. AMP-binding residues include Arg-160 and Arg-171. Glu-199 lines the ATP pocket.

The protein belongs to the adenylate kinase family. Monomer.

It localises to the cytoplasm. The catalysed reaction is AMP + ATP = 2 ADP. It participates in purine metabolism; AMP biosynthesis via salvage pathway; AMP from ADP: step 1/1. Catalyzes the reversible transfer of the terminal phosphate group between ATP and AMP. Plays an important role in cellular energy homeostasis and in adenine nucleotide metabolism. The protein is Adenylate kinase of Clostridium botulinum (strain 657 / Type Ba4).